A 173-amino-acid chain; its full sequence is Thiol-disulfide oxidoreductase ResA (173 aa).

A helical; Signal-anchor for type II membrane protein transmembrane segment spans residues 10-29; it reads VIILLILSGAVGFTLYQGYF. Positions 35-173 constitute a Thioredoxin domain; it reads MEIGKEAPNF…LEEYLKKITP (139 aa). A disulfide bridge connects residues Cys73 and Cys76.

Belongs to the thioredoxin family. ResA subfamily.

Its subcellular location is the cell membrane. It functions in the pathway protein modification; cytochrome c assembly. Thiol-disulfide oxidoreductase which is required in disulfide reduction during c-type cytochrome synthesis. May accept reducing equivalents from CcdA, leading to breakage of disulfide bonds in apocytochrome c; following this reduction heme can be covalently attached. This is Thiol-disulfide oxidoreductase ResA from Bacillus cereus (strain ATCC 10987 / NRS 248).